Consider the following 499-residue polypeptide: Cytosol aminopeptidase (499 aa).

The Mn(2+) site is built by Lys-267 and Asp-272. Lys-279 is a catalytic residue. Residues Asp-290, Asp-349, and Glu-351 each coordinate Mn(2+). Residue Arg-353 is part of the active site.

The protein belongs to the peptidase M17 family. Mn(2+) serves as cofactor.

The protein localises to the cytoplasm. The enzyme catalyses Release of an N-terminal amino acid, Xaa-|-Yaa-, in which Xaa is preferably Leu, but may be other amino acids including Pro although not Arg or Lys, and Yaa may be Pro. Amino acid amides and methyl esters are also readily hydrolyzed, but rates on arylamides are exceedingly low.. It carries out the reaction Release of an N-terminal amino acid, preferentially leucine, but not glutamic or aspartic acids.. Functionally, presumably involved in the processing and regular turnover of intracellular proteins. Catalyzes the removal of unsubstituted N-terminal amino acids from various peptides. In Buchnera aphidicola subsp. Acyrthosiphon pisum (strain APS) (Acyrthosiphon pisum symbiotic bacterium), this protein is Cytosol aminopeptidase (pepA).